Consider the following 2021-residue polypeptide: MANISPKLFQKAIQQGLKAALFTTSTAAIMLSSSGALGIAVSGVIATNNNAAFSDNVGNNWNEITAAGVANGTPARGPQNNWAFTYGGDYTITADVADHIITAINVADTTPIGLNIAQNTVVGSIVTGGNLLPVTITAGKSLTLNGNNADAANHGFGAPADNYTGLGNIALGGANAALIIQSAAPAKITLAGNINGGGIITVKTDAAINGTIGNTNALATVNVGAGIATLEGAIIKATTTKLTNAASVLTLTNVNAVLTGAIDNTTGVDNVGVLNLNGALSQVTGNIGNTNALATISVGAGKATLGGAVIKATTTKLTDNASAVTFTNPVVVTGAIDNTGNANNGIVTFTGDSTVTGNIGNTNALATISVGAGKATLGGAIIKATTTKLTDNASAVTFTNPVVVTGAIDNTGNANNGIVTFTGDSTVTGNIGNTNALATISVGAGKATLGGAIIKATTTKLTDNASAVTFTNPVVVTGAIDNTGNANNGIVTFTGDSTVTGNIGNTNALATISVGAGKATLGGAIIKATTTKLTDNASAVTFTNPVVVTGAIDNTGNANNGIVTFTGDSTVTGNIGNTNALATISVGAGKATLGGAIIKATTTKLTDNASAVTFTNPVVVTGAIDNTGNANNGIVTFTGNSTVTGNIGNTNALATVNVGAGIATLEGAVIKATTTKLTNAASVLTLTNVNAVLTGAIDNTTGVDNVGVLNLNGALSQVTGNIGNTNALATISVGAGKATLGGAVIKATTTKLTDNASAVTFTNPVVVTGAIDNTGNANNGIATFTGDSTVTGNIGNTNALATVNVGAGLLRVQGGVVKSNTINLTDNASAVTFTNPVVVTGAIDNTGNANNGIVTFTGDSTVTGNIGNTNALATISVGAGKATLGGAIIKATTTKLTDNASAVTFTNPVVVTGAIDNTGNANNGIVTFTGDSTVTGNIGNTNALATVNVGAGVTLQAGGSLDANNIDFGARSTLEFNGPLDGGGNAIPYYFKGAIANGNNAILNVNTKLLTAYHLTIGTVAEINIGAGNLFAIDASAGDVTILNAQDIHFRALDSALVLSNLTGVGVNNILLAADLVAPGVDEGTVVFDGGVNGLNIGSNVAGAARNIGDVGGNKFNTLLIYNAVTITDDVNLEGIQNVLINNNADFTSSTAFNAGTIQINDATYTIDANNGNLNIPAGNIKFAHADAQLILQNSSGNDRTITLGANIDPDNDDEGIVILNSVTAGKKLTIAGGKTFGGAHKLQDIVFKGEGDFGTAGTTFNTTNIVLDITGQLELGATTANVVLFKDAVQLTQTGNIGGFLDFNAKNGTVTLNNNVNVAGTVKNTGGTNNGTLIVLGASNLNRVNGIAMLKVGAGNVTIAKGGNVKIGEIQGTGTNTLTLPAHFKLTGSINKTGGQALKLNFMNGGSVSGVVGTAANSVGDITTAGATSFASSVNAKGTATLGGTTSFAHTFTNTGAVTLAKGSITSFAKNVTATSFVANSATINFGNSLAFNSNITGSGTTLTLGANQVTYTGTGSFTDTLTLNTTFDGAAKSGGNILIKSGSTLDLSGVSNLALVVTATNFDMNNISPDTKYTVISAETAGGLKPTPKENVKITINNDNRFVDFTFDASTLTLFAEDIAAGVIDEDFAPGGPLANIPNAANIKKSLELMEDAPNGSDARQAFNNFGLMTPLQEADATTHLMQDVVKPSDTIAAVNNQVVASNISSNITALNARMDKVQAGNKGPVSSGDEDMDAKFGAWISPFVGNATQKMCNSISGYKSDTTGGTIGFDGFVSDDLVLGLAYTRADTDIKLKNNKTGDKNKVESNIYSLYGLYSVPYENLFVEAIASYSDNKIRSKSRRVIATTLETVGYQTANGKYKSESYTGQLMAGYTYMMSENINLTPLAGLRYSTIKDKSYKETGTTYQNLTVKGKNYNTFDGLLGAKVSSNINVNEIVLTPELYAMVDYAFKNKVSAIDARLQGMTAPLPTNSFKQSKTSFDVGVGVTAKHKMMEYGINYDTNIGSKYFAQQGSVKVRVNF.

Residues 1–38 form the signal peptide; the sequence is MANISPKLFQKAIQQGLKAALFTTSTAAIMLSSSGALG. The region spanning 1734-2021 is the Autotransporter domain; the sequence is DMDAKFGAWI…QGSVKVRVNF (288 aa).

Belongs to the rickettsiae OmpA/OmpB family. Glycosylated.

Its subcellular location is the periplasm. The protein localises to the secreted. It is found in the cell surface. It localises to the cell outer membrane. In terms of biological role, elicits protective immunity. The chain is Outer membrane protein A (ompA) from Rickettsia conorii (strain ATCC VR-613 / Malish 7).